A 365-amino-acid chain; its full sequence is DNA replication and repair protein RecF (365 aa).

30–37 (GDNGEGKT) serves as a coordination point for ATP.

This sequence belongs to the RecF family.

It is found in the cytoplasm. In terms of biological role, the RecF protein is involved in DNA metabolism; it is required for DNA replication and normal SOS inducibility. RecF binds preferentially to single-stranded, linear DNA. It also seems to bind ATP. The sequence is that of DNA replication and repair protein RecF from Leptospira interrogans serogroup Icterohaemorrhagiae serovar Lai (strain 56601).